The following is a 64-amino-acid chain: Gallinacin-2 (64 aa).

An N-terminal signal peptide occupies residues 1–22 (MRILYLLFSLLFLALQVSPGLS). The propeptide occupies 23-28 (SPRRDM). 3 disulfide bridges follow: Cys-31/Cys-57, Cys-36/Cys-51, and Cys-41/Cys-58.

As to expression, expressed in circulating heterophil granulocytes and bone marrow (at protein level). Strong expression in the bone marrow, lung and testis. Moderate expression in the bursa and intestine. Low expression in the cloaca, gall bladder, brain, pancreas, trachea, air sacs and spleen. Expressed in the vagina, ovarian stroma and the theca layer of the ovarian follicle, but not in the granulosa layer of the ovarian follicle.

The protein resides in the secreted. Its subcellular location is the cytoplasmic granule. In terms of biological role, potent antibacterial activity against the Gram-negative bacterium E.coli ML-35, and against the Gram-positive bacterium L.monocytogenes EGD. Lacks antifungal activity against C.albicans. The polypeptide is Gallinacin-2 (GAL2) (Gallus gallus (Chicken)).